The following is a 558-amino-acid chain: Dihydroxy-acid dehydratase (558 aa).

Asp-78 lines the Mg(2+) pocket. Cys-119 is a [2Fe-2S] cluster binding site. Mg(2+) is bound by residues Asp-120 and Lys-121. At Lys-121 the chain carries N6-carboxylysine. Residue Cys-191 coordinates [2Fe-2S] cluster. Residue Glu-443 coordinates Mg(2+). Ser-469 acts as the Proton acceptor in catalysis.

This sequence belongs to the IlvD/Edd family. Homodimer. [2Fe-2S] cluster serves as cofactor. Requires Mg(2+) as cofactor.

The catalysed reaction is (2R)-2,3-dihydroxy-3-methylbutanoate = 3-methyl-2-oxobutanoate + H2O. It catalyses the reaction (2R,3R)-2,3-dihydroxy-3-methylpentanoate = (S)-3-methyl-2-oxopentanoate + H2O. The protein operates within amino-acid biosynthesis; L-isoleucine biosynthesis; L-isoleucine from 2-oxobutanoate: step 3/4. It participates in amino-acid biosynthesis; L-valine biosynthesis; L-valine from pyruvate: step 3/4. Functionally, functions in the biosynthesis of branched-chain amino acids. Catalyzes the dehydration of (2R,3R)-2,3-dihydroxy-3-methylpentanoate (2,3-dihydroxy-3-methylvalerate) into 2-oxo-3-methylpentanoate (2-oxo-3-methylvalerate) and of (2R)-2,3-dihydroxy-3-methylbutanoate (2,3-dihydroxyisovalerate) into 2-oxo-3-methylbutanoate (2-oxoisovalerate), the penultimate precursor to L-isoleucine and L-valine, respectively. The protein is Dihydroxy-acid dehydratase of Solidesulfovibrio magneticus (strain ATCC 700980 / DSM 13731 / RS-1) (Desulfovibrio magneticus).